The primary structure comprises 736 residues: Protein kinase C epsilon type (736 aa).

A C2 domain is found at Met-1–Ile-117. At Ser-62 the chain carries Phosphoserine. Residues Gly-169–Val-220 form a Phorbol-ester/DAG-type 1 zinc finger. The residue at position 228 (Thr-228) is a Phosphothreonine. Ser-234 carries the post-translational modification Phosphoserine. Residues Pro-242–Cys-292 form a Phorbol-ester/DAG-type 2 zinc finger. Thr-309 carries the post-translational modification Phosphothreonine. Residues Pro-310–Leu-356 form a disordered region. Ser-316, Ser-329, and Ser-337 each carry phosphoserine. Phosphoserine; by GSK3-beta is present on Ser-346. The residue at position 349 (Thr-349) is a Phosphothreonine. Ser-350 bears the Phosphoserine; by MAPK11 and MAPK14 mark. Ser-368 bears the Phosphoserine; by autocatalysis mark. The interval Phe-369–Gly-397 is disordered. Position 388 is a phosphoserine (Ser-388). One can recognise a Protein kinase domain in the interval Phe-407–Phe-667. ATP is bound by residues Leu-413–Val-421 and Lys-436. Catalysis depends on Asp-531, which acts as the Proton acceptor. The residue at position 565 (Thr-565) is a Phosphothreonine; by PDPK1. The region spanning Lys-668–Pro-736 is the AGC-kinase C-terminal domain. The residue at position 702 (Thr-702) is a Phosphothreonine. Position 709 is a phosphothreonine; by autocatalysis (Thr-709). Ser-728 carries the post-translational modification Phosphoserine; by autocatalysis.

This sequence belongs to the protein kinase superfamily. AGC Ser/Thr protein kinase family. PKC subfamily. As to quaternary structure, forms a ternary complex with TRIM63 and RACK1/GN2BL1. Can form a complex with PDLIM5 and N-type calcium channel. Interacts with COPB1. Interacts with DGKQ. Interacts with STAT3. Interacts with YWHAB. Interacts with HSP90AB1; promotes functional activation in a heat shock-dependent manner. Interacts (via phorbol-ester/DAG-type 2 domain) with PRPH and VIM. Interacts with NLRP5/MATER. Phosphorylation on Thr-565 by PDPK1 triggers autophosphorylation on Ser-728. Phosphorylation in the hinge domain at Ser-350 by MAPK11 or MAPK14, Ser-346 by GSK3B and Ser-368 by autophosphorylation is required for interaction with YWHAB. In response to growth factors, phosphorylated at Thr-702 and Ser-728 by the mTORC2 complex, promoting autophosphorylation and activation of PRKCE.

It is found in the cytoplasm. Its subcellular location is the cytoskeleton. It localises to the cell membrane. The protein localises to the perinuclear region. The protein resides in the nucleus. The catalysed reaction is L-seryl-[protein] + ATP = O-phospho-L-seryl-[protein] + ADP + H(+). It carries out the reaction L-threonyl-[protein] + ATP = O-phospho-L-threonyl-[protein] + ADP + H(+). Novel PKCs (PRKCD, PRKCE, PRKCH and PRKCQ) are calcium-insensitive, but activated by diacylglycerol (DAG) and phosphatidylserine. Three specific sites; Thr-565 (activation loop of the kinase domain), Thr-709 (turn motif) and Ser-728 (hydrophobic region), need to be phosphorylated for its full activation. In terms of biological role, calcium-independent, phospholipid- and diacylglycerol (DAG)-dependent serine/threonine-protein kinase that plays essential roles in the regulation of multiple cellular processes linked to cytoskeletal proteins, such as cell adhesion, motility, migration and cell cycle, functions in neuron growth and ion channel regulation, and is involved in immune response, cancer cell invasion and regulation of apoptosis. Mediates cell adhesion to the extracellular matrix via integrin-dependent signaling, by mediating angiotensin-2-induced activation of integrin beta-1 (ITGB1) in cardiac fibroblasts. Phosphorylates MARCKS, which phosphorylates and activates PTK2/FAK, leading to the spread of cardiomyocytes. Involved in the control of the directional transport of ITGB1 in mesenchymal cells by phosphorylating vimentin (VIM), an intermediate filament (IF) protein. In epithelial cells, associates with and phosphorylates keratin-8 (KRT8), which induces targeting of desmoplakin at desmosomes and regulates cell-cell contact. Phosphorylates IQGAP1, which binds to CDC42, mediating epithelial cell-cell detachment prior to migration. During cytokinesis, forms a complex with YWHAB, which is crucial for daughter cell separation, and facilitates abscission by a mechanism which may implicate the regulation of RHOA. In cardiac myocytes, regulates myofilament function and excitation coupling at the Z-lines, where it is indirectly associated with F-actin via interaction with COPB1. During endothelin-induced cardiomyocyte hypertrophy, mediates activation of PTK2/FAK, which is critical for cardiomyocyte survival and regulation of sarcomere length. Plays a role in the pathogenesis of dilated cardiomyopathy via persistent phosphorylation of troponin I (TNNI3). Involved in nerve growth factor (NFG)-induced neurite outgrowth and neuron morphological change independently of its kinase activity, by inhibition of RHOA pathway, activation of CDC42 and cytoskeletal rearrangement. May be involved in presynaptic facilitation by mediating phorbol ester-induced synaptic potentiation. Phosphorylates gamma-aminobutyric acid receptor subunit gamma-2 (GABRG2), which reduces the response of GABA receptors to ethanol and benzodiazepines and may mediate acute tolerance to the intoxicating effects of ethanol. Upon PMA treatment, phosphorylates the capsaicin- and heat-activated cation channel TRPV1, which is required for bradykinin-induced sensitization of the heat response in nociceptive neurons. Is able to form a complex with PDLIM5 and N-type calcium channel, and may enhance channel activities and potentiates fast synaptic transmission by phosphorylating the pore-forming alpha subunit CACNA1B (CaV2.2). Downstream of TLR4, plays an important role in the lipopolysaccharide (LPS)-induced immune response by phosphorylating and activating TICAM2/TRAM, which in turn activates the transcription factor IRF3 and subsequent cytokines production. In differentiating erythroid progenitors, is regulated by EPO and controls the protection against the TNFSF10/TRAIL-mediated apoptosis, via BCL2. May be involved in the regulation of the insulin-induced phosphorylation and activation of AKT1. Phosphorylates NLRP5/MATER and may thereby modulate AKT pathway activation in cumulus cells. Phosphorylates and activates LRRK1, which phosphorylates RAB proteins involved in intracellular trafficking. The chain is Protein kinase C epsilon type (PRKCE) from Oryctolagus cuniculus (Rabbit).